The chain runs to 65 residues: Large ribosomal subunit protein uL29 (65 aa).

Belongs to the universal ribosomal protein uL29 family.

The polypeptide is Large ribosomal subunit protein uL29 (Thioalkalivibrio sulfidiphilus (strain HL-EbGR7)).